We begin with the raw amino-acid sequence, 254 residues long: Protein GltF (254 aa).

A signal peptide spans Met1–Ala25. Residues Pro213–Val229 form a helical membrane-spanning segment.

The protein to E.coli YhcF.

The protein localises to the cell membrane. Its function is as follows. Involved in induction of the so-called NTR enzymes in response to nitrogen deprivation, as well as in glutamate biosynthesis. May mediate the glutamate-dependent repression of the GLT operon. This is Protein GltF (gltF) from Escherichia coli (strain K12).